Here is a 424-residue protein sequence, read N- to C-terminus: Serine--tRNA ligase (424 aa).

Residue 230–232 (TAE) participates in L-serine binding. Position 261–263 (261–263 (RSE)) interacts with ATP. Glutamate 284 contributes to the L-serine binding site. 348–351 (EISS) provides a ligand contact to ATP. Serine 384 is an L-serine binding site.

This sequence belongs to the class-II aminoacyl-tRNA synthetase family. Type-1 seryl-tRNA synthetase subfamily. In terms of assembly, homodimer. The tRNA molecule binds across the dimer.

Its subcellular location is the cytoplasm. It carries out the reaction tRNA(Ser) + L-serine + ATP = L-seryl-tRNA(Ser) + AMP + diphosphate + H(+). The enzyme catalyses tRNA(Sec) + L-serine + ATP = L-seryl-tRNA(Sec) + AMP + diphosphate + H(+). It participates in aminoacyl-tRNA biosynthesis; selenocysteinyl-tRNA(Sec) biosynthesis; L-seryl-tRNA(Sec) from L-serine and tRNA(Sec): step 1/1. Functionally, catalyzes the attachment of serine to tRNA(Ser). Is also able to aminoacylate tRNA(Sec) with serine, to form the misacylated tRNA L-seryl-tRNA(Sec), which will be further converted into selenocysteinyl-tRNA(Sec). This is Serine--tRNA ligase from Streptococcus pneumoniae (strain Hungary19A-6).